The following is a 121-amino-acid chain: Large ribosomal subunit protein bL12 (121 aa).

It belongs to the bacterial ribosomal protein bL12 family. Homodimer. Part of the ribosomal stalk of the 50S ribosomal subunit. Forms a multimeric L10(L12)X complex, where L10 forms an elongated spine to which 2 to 4 L12 dimers bind in a sequential fashion. Binds GTP-bound translation factors.

Its function is as follows. Forms part of the ribosomal stalk which helps the ribosome interact with GTP-bound translation factors. Is thus essential for accurate translation. The sequence is that of Large ribosomal subunit protein bL12 from Escherichia coli O81 (strain ED1a).